Here is a 335-residue protein sequence, read N- to C-terminus: MAETATRSDSGMFWKATTYKEQYWDGYLAARPKYSSDFYERIVDYYKAHNPSPPTPTVAHDVGTGPGQVASELCKYFDKVIASDPNSTHLAVASARNEKSGLNHKITWTEVSAEDLNSHYPAGSASFLAAAECLPLLDVPRALNTFAHLLHPNGTLAAWFYGRPVFSEPTVAAKCQPILNDIIDLTFEKVIKGAPPAHKTTWKRSTDTLYSFLDNVTFPAETWRDVYRFKWNPHLPLSVVGPNACDYPIEPSSCIDPEREKVVEAKDPHFWEEVWDISEVRRFVECLLPNIEDLKSKGVYDHVEVKYKELEEAMGGDNAKKEITWPVVLILATRV.

The protein belongs to the methyltransferase superfamily.

It participates in pigment biosynthesis. The protein operates within secondary metabolite biosynthesis. Its function is as follows. Methyltransferase; part of the gene cluster that mediates the biosynthesis of pleosporalin A, ascomycone A, as well as a third cryptic naphthoquinone derived pigment, all responsible for the coloration of conidia. Essential for the production of pleosporalin A, but not the 2 other final products. The pathway begins with the biosynthesis of the cyclized heptaketide 3-acetonyl-1,6,8-trihydroxy-2-naphthaldehyde by the NR-PKS pgmA. The C-6 hydroxyl group is further methylated by the O-methyltransferase pgmB to yield fusarubinaldehyde which is in turn oxidized by the cytochrome P450 monooxygenase pgmC at C-9. The C-1 hydroxyl group is then methylated spontaneously. Although pgmE, pgmD and pgmH are essential for the production of pleosporalin A, it is not the case for the 2 other final products and it remains difficult to assign a specific function to each enzyme. PgmF and pgmG seem not to be involved in pigment biosynthesis although they were regulated by the cluster-specific transcription factor pgmR. In Aspergillus terreus, this protein is Methyltransferase pgmE.